The chain runs to 821 residues: Glycogen phosphorylase (821 aa).

Position 667 is an N6-(pyridoxal phosphate)lysine (Lys-667).

This sequence belongs to the glycogen phosphorylase family. Pyridoxal 5'-phosphate is required as a cofactor.

It carries out the reaction [(1-&gt;4)-alpha-D-glucosyl](n) + phosphate = [(1-&gt;4)-alpha-D-glucosyl](n-1) + alpha-D-glucose 1-phosphate. Phosphorylase is an important allosteric enzyme in carbohydrate metabolism. Enzymes from different sources differ in their regulatory mechanisms and in their natural substrates. However, all known phosphorylases share catalytic and structural properties. This is Glycogen phosphorylase (glgP) from Haemophilus influenzae (strain ATCC 51907 / DSM 11121 / KW20 / Rd).